The sequence spans 168 residues: Prespore-specific protein A (168 aa).

Residues Met-1–Ala-19 form the signal peptide. Residues Thr-110, Thr-114, Thr-116, Thr-118, Thr-120, Thr-122, Thr-124, Thr-126, Thr-128, Thr-130, Thr-132, Thr-134, and Thr-138 are each glycosylated (O-linked (GlcNAc) threonine). A run of 3 repeats spans residues Thr-116–Val-119, Thr-120–Val-123, and Thr-124–Val-127. The segment at Thr-116–Val-127 is 3 X 4 AA tandem repeats of T-P-T-V. Low complexity predominate over residues Thr-116 to Pro-131. The segment at Thr-116–Gly-147 is disordered. The O-linked (GlcNAc) serine glycan is linked to Ser-140. Gly-147 is lipidated: GPI-like-anchor amidated glycine. A propeptide spans Ser-148 to Cys-168 (removed in mature form).

It belongs to the ponticulin family. In terms of processing, O-glycosylated in the repeat region. The oligosaccharides contain N-acetylglucosamine and fucose as the major constituents. Post-translationally, the GPI-like-anchor contains a phosphoceramide group, rather than a phosphatidyl group.

Its subcellular location is the cell membrane. Its function is as follows. May bind F-actin and nucleates actin assembly. The sequence is that of Prespore-specific protein A (pspA) from Dictyostelium discoideum (Social amoeba).